Here is a 254-residue protein sequence, read N- to C-terminus: Fasciclin-like arabinogalactan protein 7 (254 aa).

The N-terminal stretch at 1–22 (MAKMQLSIFIAVVALIVCSASA) is a signal peptide. An FAS1 domain is found at 44-186 (NVNLTELLSV…VAVYQVNRVL (143 aa)). N-linked (GlcNAc...) asparagine glycans are attached at residues asparagine 46, asparagine 78, asparagine 104, and asparagine 130. The tract at residues 203–233 (APAPIVSAPSDSPSVADSEGASSPKSSHKNS) is disordered. The span at 206–220 (PIVSAPSDSPSVADS) shows a compositional bias: low complexity. A compositionally biased stretch (polar residues) spans 222-233 (GASSPKSSHKNS). A lipid anchor (GPI-anchor amidated asparagine) is attached at asparagine 232. Residues 233-254 (SGQKLLLAPISMVISGLVALFL) constitute a propeptide, removed in mature form.

The protein belongs to the fasciclin-like AGP family.

The protein localises to the cell membrane. Its function is as follows. May be a cell surface adhesion protein. In Arabidopsis thaliana (Mouse-ear cress), this protein is Fasciclin-like arabinogalactan protein 7 (FLA7).